The sequence spans 327 residues: MMSIYFWVAIHIFSSFWMIQNIEICDFSRGSLDVALMNNKILIDNNLKEENYNDNNIKHCVIFTKGLEIFTFICPKGNNNDNYKGVEIRPEQCFEKVRINGKEENLKDILKGVVIEKKETDTEIIRKALIPPTIYQDMSFECSCDNSLTIKDNYIGARGIMKVHLKKNIIFGCDFNYDSNEPKLSNGKSAFAQFYDKQVVDSNKNIICNTQVNNKEVYLGLVCPEGYGMYPENCFENVLFEKKVINITELIKHDVKLHIEKNKNISFASFILNPNENPKSFSCHCIKNNDNSFPLIANITFSNYESYSFNFHVTYLILIFILLISYI.

6-Cys domains lie at 21 to 168 (NIEI…LKKN) and 169 to 304 (IIFG…FSNY). Intrachain disulfides connect Cys-25/Cys-60, Cys-74/Cys-144, Cys-93/Cys-142, Cys-173/Cys-208, Cys-223/Cys-285, and Cys-234/Cys-283. Asn-246, Asn-264, and Asn-298 each carry an N-linked (GlcNAc...) asparagine glycan.

It localises to the cell surface. It is found in the cell membrane. The polypeptide is Surface protein P12p (P12p) (Plasmodium berghei (strain Anka)).